The sequence spans 494 residues: UDP-N-acetylmuramate--L-alanine ligase (494 aa).

122 to 128 (GTHGKTT) lines the ATP pocket.

This sequence belongs to the MurCDEF family.

The protein localises to the cytoplasm. The enzyme catalyses UDP-N-acetyl-alpha-D-muramate + L-alanine + ATP = UDP-N-acetyl-alpha-D-muramoyl-L-alanine + ADP + phosphate + H(+). It participates in cell wall biogenesis; peptidoglycan biosynthesis. Its function is as follows. Cell wall formation. This is UDP-N-acetylmuramate--L-alanine ligase from Mycobacterium bovis (strain ATCC BAA-935 / AF2122/97).